Consider the following 246-residue polypeptide: C-X-C motif chemokine 16 (246 aa).

An N-terminal signal peptide occupies residues 1 to 26 (MRRGFGPLSLAFFLFLLALLTLPGDG). Over 27–201 (NQGSVAGSCS…PGAGASTPAW (175 aa)) the chain is Extracellular. 2 disulfides stabilise this stretch: Cys35–Cys65 and Cys37–Cys79. Disordered regions lie at residues 104–150 (GKSF…SGAL) and 175–198 (PEAE…GAST). Positions 128-146 (PSDTSTPAHSQSTQHSTLP) are enriched in polar residues. Residues 175–189 (PEAEANEKQQDDRQQ) show a composition bias toward basic and acidic residues. A helical membrane pass occupies residues 202–222 (VPVLSLLAIVFFLTAAMAYVL). Topologically, residues 223-246 (CNRRATQQNSAGLQLWYTPVEPRP) are cytoplasmic.

It belongs to the intercrine alpha (chemokine CxC) family. Post-translationally, glycosylated. As to expression, widely expressed. Not detected in purified B- and T-cells.

Its subcellular location is the membrane. Functionally, induces a strong chemotactic response. Induces calcium mobilization. Binds to CXCR6/Bonzo. Also acts as a scavenger receptor on macrophages, which specifically binds to OxLDL (oxidized low density lipoprotein), suggesting that it may be involved in pathophysiology such as atherogenesis. This Mus musculus (Mouse) protein is C-X-C motif chemokine 16 (Cxcl16).